The primary structure comprises 218 residues: Adenylate kinase (218 aa).

An ATP-binding site is contributed by 10–15 (GAGKGT). Residues 30-59 (STGDMFRAAMADQTDLGVKAKAFIDKGELV) form an NMP region. Residues T31, R36, 57-59 (ELV), 85-88 (GFPR), and Q92 each bind AMP. The interval 126–164 (GRFICKTCGATYHKLYHPTQVEGTCDRCGGHVFFQREDD) is LID. R127 is an ATP binding site. Positions 130 and 133 each coordinate Zn(2+). 136–137 (TY) provides a ligand contact to ATP. Zn(2+)-binding residues include C150 and C153. AMP is bound by residues R161 and R172. ATP is bound at residue Q200.

This sequence belongs to the adenylate kinase family. In terms of assembly, monomer.

The protein resides in the cytoplasm. The enzyme catalyses AMP + ATP = 2 ADP. Its pathway is purine metabolism; AMP biosynthesis via salvage pathway; AMP from ADP: step 1/1. Its function is as follows. Catalyzes the reversible transfer of the terminal phosphate group between ATP and AMP. Plays an important role in cellular energy homeostasis and in adenine nucleotide metabolism. This Latilactobacillus sakei subsp. sakei (strain 23K) (Lactobacillus sakei subsp. sakei) protein is Adenylate kinase.